A 287-amino-acid polypeptide reads, in one-letter code: Putative S-adenosyl-L-methionine-dependent methyltransferase SACE_1742 (287 aa).

Residues Asp-119 and 148–149 (DL) contribute to the S-adenosyl-L-methionine site.

This sequence belongs to the UPF0677 family.

Its function is as follows. Exhibits S-adenosyl-L-methionine-dependent methyltransferase activity. This Saccharopolyspora erythraea (strain ATCC 11635 / DSM 40517 / JCM 4748 / NBRC 13426 / NCIMB 8594 / NRRL 2338) protein is Putative S-adenosyl-L-methionine-dependent methyltransferase SACE_1742.